Here is a 402-residue protein sequence, read N- to C-terminus: Nicotinate phosphoribosyltransferase (402 aa).

Residue His-224 is modified to Phosphohistidine; by autocatalysis.

The protein belongs to the NAPRTase family. In terms of processing, transiently phosphorylated on a His residue during the reaction cycle. Phosphorylation strongly increases the affinity for substrates and increases the rate of nicotinate D-ribonucleotide production. Dephosphorylation regenerates the low-affinity form of the enzyme, leading to product release.

It carries out the reaction nicotinate + 5-phospho-alpha-D-ribose 1-diphosphate + ATP + H2O = nicotinate beta-D-ribonucleotide + ADP + phosphate + diphosphate. It functions in the pathway cofactor biosynthesis; NAD(+) biosynthesis; nicotinate D-ribonucleotide from nicotinate: step 1/1. In terms of biological role, catalyzes the synthesis of beta-nicotinate D-ribonucleotide from nicotinate and 5-phospho-D-ribose 1-phosphate at the expense of ATP. The sequence is that of Nicotinate phosphoribosyltransferase from Neisseria meningitidis serogroup A / serotype 4A (strain DSM 15465 / Z2491).